The primary structure comprises 642 residues: Tigger transposable element derived 5 (642 aa).

A disordered region spans residues 1-54; the sequence is MYPASPSAGPALHPVPHRARLPRPRCLAEPPRSPAPGPGSTARPPPPAPGPRPR. The span at 31–52 shows a compositional bias: pro residues; that stretch reads PRSPAPGPGSTARPPPPAPGPR. Residues 56–107 enclose the HTH psq-type domain; the sequence is AVKMTFRKAYSIKDKLQAIERVKGGERQASVCRDFGVPGGTLRGWLKDEPKL. DNA-binding regions (H-T-H motif) lie at residues 83–103 and 154–187; these read QASVCRDFGVPGGTLRGWLKD and PVIQAQAEAFARQIYGPECTFKASHGWFWRWQKR. Residues 121-194 enclose the HTH CENPB-type domain; that stretch reads QRKKMRLANE…QKRHGISSQR (74 aa). Positions 198–208 are enriched in low complexity; it reads EAEPPVAGPAP. The disordered stretch occupies residues 198–230; the sequence is EAEPPVAGPAPVKEEPAQPSSAGLLLDGTPATL. Positions 239–364 constitute a DDE-1 domain; the sequence is DEQIYNANVT…CLQQKAVLLV (126 aa). The segment at 543-583 is disordered; sequence GLPEGCGEEVAPAAPPSPASLPSSIGAGEEEEEEATEQGGV.

Belongs to the tigger transposable element derived protein family.

It is found in the nucleus. This Rattus norvegicus (Rat) protein is Tigger transposable element derived 5 (Tigd5).